The sequence spans 336 residues: Probable allantoicase 2 (336 aa).

Belongs to the allantoicase family.

The catalysed reaction is allantoate + H2O = (S)-ureidoglycolate + urea. It participates in nitrogen metabolism; (S)-allantoin degradation; (S)-ureidoglycolate from allantoate (aminidohydrolase route): step 1/1. This Burkholderia pseudomallei (strain K96243) protein is Probable allantoicase 2.